The following is a 494-amino-acid chain: Histidine--tRNA ligase (494 aa).

It belongs to the class-II aminoacyl-tRNA synthetase family. In terms of assembly, homodimer.

It is found in the cytoplasm. It carries out the reaction tRNA(His) + L-histidine + ATP = L-histidyl-tRNA(His) + AMP + diphosphate + H(+). This Cereibacter sphaeroides (strain ATCC 17023 / DSM 158 / JCM 6121 / CCUG 31486 / LMG 2827 / NBRC 12203 / NCIMB 8253 / ATH 2.4.1.) (Rhodobacter sphaeroides) protein is Histidine--tRNA ligase.